We begin with the raw amino-acid sequence, 125 residues long: Splicing factor 3B subunit 6 (125 aa).

Positions 16-29 are interaction with pre-mRNA branch site; sequence EVNRILYIRNLPYK. Residues 19–94 enclose the RRM domain; sequence RILYIRNLPY…RYLVVLYYNA (76 aa). An N6-acetyllysine; alternate modification is found at K29. Residue K29 forms a Glycyl lysine isopeptide (Lys-Gly) (interchain with G-Cter in SUMO2); alternate linkage. K41 is modified (N6-acetyllysine).

In terms of assembly, component of the 17S U2 SnRNP complex, a ribonucleoprotein complex that contains small nuclear RNA (snRNA) U2 and a number of specific proteins. Part of the SF3B subcomplex of the 17S U2 SnRNP complex. SF3B associates with the splicing subcomplex SF3A and a 12S RNA unit to form the U2 small nuclear ribonucleoproteins complex (U2 snRNP). Within the SF3B complex interacts directly with SF3B1. Component of the minor spliceosome, which splices U12-type introns.

It is found in the nucleus. In terms of biological role, component of the 17S U2 SnRNP complex of the spliceosome, a large ribonucleoprotein complex that removes introns from transcribed pre-mRNAs. The 17S U2 SnRNP complex (1) directly participates in early spliceosome assembly and (2) mediates recognition of the intron branch site during pre-mRNA splicing by promoting the selection of the pre-mRNA branch-site adenosine, the nucleophile for the first step of splicing. Within the 17S U2 SnRNP complex, SF3B6 is part of the SF3B subcomplex, which is required for 'A' complex assembly formed by the stable binding of U2 snRNP to the branchpoint sequence in pre-mRNA. Sequence independent binding of SF3A and SF3B subcomplexes upstream of the branch site is essential, it may anchor U2 snRNP to the pre-mRNA. Within the 17S U2 SnRNP complex, SF3B6 directly contacts the pre-mRNA branch site adenosine for the first catalytic step of splicing. SF3B6 stabilizes the intron branch site-U2 snRNA duplex, thereby promoting-binding of introns with poor sequence complementarity. Also acts as a component of the minor spliceosome, which is involved in the splicing of U12-type introns in pre-mRNAs. The chain is Splicing factor 3B subunit 6 (Sf3b6) from Mus musculus (Mouse).